Reading from the N-terminus, the 258-residue chain is Zinc import ATP-binding protein ZnuC (258 aa).

Residues I7 to G233 form the ABC transporter domain. G39 to S46 is a binding site for ATP.

This sequence belongs to the ABC transporter superfamily. Zinc importer (TC 3.A.1.15.5) family. As to quaternary structure, the complex is composed of two ATP-binding proteins (ZnuC), two transmembrane proteins (ZnuB) and a solute-binding protein (ZnuA).

It is found in the cell inner membrane. The catalysed reaction is Zn(2+)(out) + ATP(in) + H2O(in) = Zn(2+)(in) + ADP(in) + phosphate(in) + H(+)(in). Functionally, part of the ABC transporter complex ZnuABC involved in zinc import. Responsible for energy coupling to the transport system. This Hydrogenovibrio crunogenus (strain DSM 25203 / XCL-2) (Thiomicrospira crunogena) protein is Zinc import ATP-binding protein ZnuC.